The chain runs to 225 residues: Superoxide dismutase [Mn], mitochondrial (225 aa).

A mitochondrion-targeting transit peptide spans 1-27 (MITAITRTALPRATLRTSLATMSTIRA). Mn(2+)-binding residues include H53, H101, D187, and H191.

It belongs to the iron/manganese superoxide dismutase family. It depends on Mn(2+) as a cofactor.

It is found in the mitochondrion. It localises to the cytoplasm. The catalysed reaction is 2 superoxide + 2 H(+) = H2O2 + O2. In terms of biological role, destroys radicals which are normally produced within the cells and which are toxic to biological systems. Destroys mitochondrial radicals produced by oxidative stress. Its function is as follows. Destroys cytoplasmic radicals produced in low copper environments; a condition which inactivates the cytoplasmic copper-dependent superoxide dismutase SOD1. The protein is Superoxide dismutase [Mn], mitochondrial of Cryptococcus neoformans var. grubii serotype A (strain H99 / ATCC 208821 / CBS 10515 / FGSC 9487) (Filobasidiella neoformans var. grubii).